Consider the following 115-residue polypeptide: MSSPQKTSLAARRRAERMSREAMYEVIRSPLITEKATLLSERSQVVFRVAIDATKPEIKAAVEGLFGVKVIGVNTLVNKGKTKRFRGRPGQRSDVKKAYVQLVAGQAIDLTAKLA.

Belongs to the universal ribosomal protein uL23 family. As to quaternary structure, part of the 50S ribosomal subunit. Contacts protein L29, and trigger factor when it is bound to the ribosome.

Its function is as follows. One of the early assembly proteins it binds 23S rRNA. One of the proteins that surrounds the polypeptide exit tunnel on the outside of the ribosome. Forms the main docking site for trigger factor binding to the ribosome. The polypeptide is Large ribosomal subunit protein uL23 (Granulibacter bethesdensis (strain ATCC BAA-1260 / CGDNIH1)).